A 103-amino-acid polypeptide reads, in one-letter code: MANKQKIRIRLKAFDHMILDQSAEKIVETAKRTGANVSGPVPLPTDKNVYTVIRAPHKFKDSREQFEMRTHKRLIDILDPTSKTVDSLMRLDLPSGVDIEIKL.

Belongs to the universal ribosomal protein uS10 family. Part of the 30S ribosomal subunit.

In terms of biological role, involved in the binding of tRNA to the ribosomes. The protein is Small ribosomal subunit protein uS10 of Natranaerobius thermophilus (strain ATCC BAA-1301 / DSM 18059 / JW/NM-WN-LF).